The primary structure comprises 805 residues: MGMVLFACLLLLIIFPTCGYAAINTSSPLSIRQTLSSPGGFYELGFFSPNNTQNQYVGIWFKKIVPRVVVWVANRDTPVTSSAANLTISSNGSLILLDGKQDVIWSTGKAFTSNKCHAELLDTGNFVVIDDVSGNKLWQSFEHLGNTMLPQSSLMYDTSNGKKRVLTTWKSNSDPSPGEFSLEITPQIPTQGLIRRGSVPYWRCGPWAKTRFSGISGIDASYVSPFSVVQDTAAGTGSFSYSTLRNYNLSYVTLTPEGKMKILWDDGNNWKLHLSLPENPCDLYGRCGPYGLCVRSDPPKCECLKGFVPKSDEEWGKGNWTSGCVRRTKLSCQAKSSMKTQGKDTDIFYRMTDVKTPDLHQFASFLNAEQCYQGCLGNCSCTAFAYISGIGCLVWNGELADTVQFLSSGEFLFIRLASSELAGSSRRKIIVGTTVSLSIFLILVFAAIMLWRYRAKQNDAWKNGFERQDVSGVNFFEMHTIRTATNNFSPSNKLGQGGFGPVYKGKLVDGKEIGVKRLASSSGQGTEEFMNEITLISKLQHRNLVRLLGYCIDGEEKLLIYEFMVNKSLDIFIFDPCLKFELDWPKRFNIIQGIARGLLYLHRDSRLRVIHRDLKVSNILLDDRMNPKISDFGLARMFQGTQYQDNTRRVVGTLGYMSPEYAWAGLFSEKSDIYSFGVLMLEIISGKRISRFIYGDESKGLLAYTWDSWCETGGSNLLDRDLTDTCQAFEVARCVQIGLLCVQHEAVDRPNTLQVLSMLTSATDLPVPKQPIFAVHTLNDMPMLQANSQDFLSVNEMTESMIQGR.

Residues 1–21 (MGMVLFACLLLLIIFPTCGYA) form the signal peptide. The Bulb-type lectin domain maps to 22-141 (AINTSSPLSI…VSGNKLWQSF (120 aa)). Topologically, residues 22-428 (AINTSSPLSI…SELAGSSRRK (407 aa)) are extracellular. N-linked (GlcNAc...) asparagine glycans are attached at residues Asn24, Asn50, Asn85, Asn91, and Asn248. Positions 277–313 (PENPCDLYGRCGPYGLCVRSDPPKCECLKGFVPKSDE) constitute an EGF-like domain. Disulfide bonds link Cys281–Cys293 and Cys287–Cys301. N-linked (GlcNAc...) asparagine glycosylation is found at Asn319 and Asn378. One can recognise a PAN domain in the interval 332–418 (CQAKSSMKTQ…GEFLFIRLAS (87 aa)). Disulfide bonds link Cys371–Cys392 and Cys375–Cys381. Residues 429-449 (IIVGTTVSLSIFLILVFAAIM) traverse the membrane as a helical segment. Topologically, residues 450-805 (LWRYRAKQND…EMTESMIQGR (356 aa)) are cytoplasmic. The Protein kinase domain occupies 488-773 (FSPSNKLGQG…DLPVPKQPIF (286 aa)). ATP-binding positions include 494–502 (LGQGGFGPV) and Lys516. 2 positions are modified to phosphoserine: Ser522 and Ser537. The interval 577 to 594 (CLKFELDWPKRFNIIQGI) is caM-binding. Tyr600 is modified (phosphotyrosine). Residue Asp613 is the Proton acceptor of the active site. A phosphoserine mark is found at Ser617 and Ser630. Thr647 carries the phosphothreonine modification. Ser690 and Ser793 each carry phosphoserine.

The protein belongs to the protein kinase superfamily. Ser/Thr protein kinase family. As to quaternary structure, interacts with PUB9, PUB13, PUB14, PUB29, PUB38, PUB44 and PUB45. Interacts with PBL34, PBL35 and PBL36. Autophosphorylated at Tyr-600. Autophosphorylation at Tyr-600 is required for downstream phosphorylation of the receptor-like cytoplasmic kinase PBL34, PBL35 and PBL36, and activation of plant immunity.

The protein localises to the cell membrane. It catalyses the reaction L-seryl-[protein] + ATP = O-phospho-L-seryl-[protein] + ADP + H(+). The catalysed reaction is L-threonyl-[protein] + ATP = O-phospho-L-threonyl-[protein] + ADP + H(+). It carries out the reaction L-tyrosyl-[protein] + ATP = O-phospho-L-tyrosyl-[protein] + ADP + H(+). In terms of biological role, S-domain receptor protein kinase involved in lipopolysaccharide (LPS) sensing. Specifically detects LPS of Pseudomonas and Xanthomonas species. LPS are major components of the outer membrane of Gram-negative bacteria and are important microbe-associated molecular patterns (MAMPs) that trigger biphasic production of reactive oxygen species (ROS) and immune responses in plants. Seems to be only partially associated with the second LPS-triggered ROS burst. Mediates defense signaling in response to the medium-chain 3-hydroxy fatty acid 3-OH-C10:0, a pathogen-associated molecular pattern (PAMP) which induces autophosphorylation at Tyr-600. Autophosphorylation at Tyr-600 is required for downstream phosphorylation of the receptor-like cytoplasmic kinase PBL34, PBL35 and PBL36, and activation of plant immunity. Its function is as follows. (Microbial infection) Targeted by the bacterial type III effector protein tyrosine phosphatase HopAO1 from Pseudomonas syringae. HopAO1 dephosphorylates Tyr-600, which suppresses the immune response. The protein is G-type lectin S-receptor-like serine/threonine-protein kinase SD1-29 of Arabidopsis thaliana (Mouse-ear cress).